Here is a 348-residue protein sequence, read N- to C-terminus: Propane 2-monooxygenase, reductase component (348 aa).

In terms of domain architecture, 2Fe-2S ferredoxin-type spans 5 to 95 (HKINFEPVDI…DCTIELLNFD (91 aa)). The [2Fe-2S] cluster site is built by C39, C44, C47, and C79. Residues 105-206 (IQDVRTEVLA…TGPYGSFTLK (102 aa)) enclose the FAD-binding FR-type domain.

It belongs to the bacterial ring-hydroxylating dioxygenase ferredoxin reductase family. As to quaternary structure, the propane 2-monooxygenase multicomponent enzyme system is composed of an electron transfer component and a monooxygenase component interacting with the effector protein MimD. The electron transfer component is composed of a reductase (MimB), and the monooxygenase component is formed by a large subunit (MimA) and a small subunit (MimC). Requires FAD as cofactor. [2Fe-2S] cluster is required as a cofactor.

Reductase component of the propane 2-monooxygenase multicomponent enzyme system which is involved in the degradation of propane via the O2-dependent hydroxylation of propane. Reductase catalyzes the transfer of electrons from NADH or NADPH to monooxygenase. This Mycolicibacterium goodii (Mycobacterium goodii) protein is Propane 2-monooxygenase, reductase component.